A 407-amino-acid polypeptide reads, in one-letter code: Elongation factor Tu (407 aa).

The tr-type G domain maps to 10–217 (KPHVNVGTIG…ALDSYIPEPE (208 aa)). Positions 19–26 (GHVDHGKT) are G1. Residue 19-26 (GHVDHGKT) participates in GTP binding. Thr26 provides a ligand contact to Mg(2+). The tract at residues 60-64 (GITIA) is G2. Residues 81-84 (DCPG) are G3. GTP-binding positions include 81 to 85 (DCPGH) and 136 to 139 (NKAD). Positions 136–139 (NKAD) are G4. A G5 region spans residues 184–186 (SAL).

It belongs to the TRAFAC class translation factor GTPase superfamily. Classic translation factor GTPase family. EF-Tu/EF-1A subfamily. As to quaternary structure, monomer.

It localises to the cytoplasm. It carries out the reaction GTP + H2O = GDP + phosphate + H(+). Functionally, GTP hydrolase that promotes the GTP-dependent binding of aminoacyl-tRNA to the A-site of ribosomes during protein biosynthesis. This Saccharophagus degradans (strain 2-40 / ATCC 43961 / DSM 17024) protein is Elongation factor Tu.